A 62-amino-acid chain; its full sequence is Ubiquinol-cytochrome c reductase complex 6.7 kDa protein (62 aa).

The Mitochondrial matrix portion of the chain corresponds to 2-25; sequence TSPAAAGNGLFKFLRPKLRPQSTD. The chain crosses the membrane as a helical span at residues 26 to 44; sequence IQAAAGWGVAAVTGALWVI. The Mitochondrial intermembrane segment spans residues 45–62; sequence QPWDFLRKTFIEKQEEEK.

This sequence belongs to the UQCR11/QCR10 family. In terms of assembly, component of the ubiquinol-cytochrome c oxidoreductase (cytochrome b-c1 complex, complex III, CIII), a multisubunit enzyme composed of 3 respiratory subunits cytochrome b, cytochrome c1 and Rieske protein, 2 core protein subunits, and additional low-molecular weight protein subunits. The complex exists as an obligatory dimer and forms supercomplexes (SCs) in the inner mitochondrial membrane with cytochrome c oxidase (complex IV, CIV).

Its subcellular location is the mitochondrion inner membrane. In terms of biological role, component of the ubiquinol-cytochrome c oxidoreductase, a multisubunit transmembrane complex that is part of the mitochondrial electron transport chain which drives oxidative phosphorylation. The respiratory chain contains 3 multisubunit complexes succinate dehydrogenase (complex II, CII), ubiquinol-cytochrome c oxidoreductase (cytochrome b-c1 complex, complex III, CIII) and cytochrome c oxidase (complex IV, CIV), that cooperate to transfer electrons derived from NADH and succinate to molecular oxygen, creating an electrochemical gradient over the inner membrane that drives transmembrane transport and the ATP synthase. The cytochrome b-c1 complex catalyzes electron transfer from ubiquinol to cytochrome c, linking this redox reaction to translocation of protons across the mitochondrial inner membrane, with protons being carried across the membrane as hydrogens on the quinol. In the process called Q cycle, 2 protons are consumed from the matrix, 4 protons are released into the intermembrane space and 2 electrons are passed to cytochrome c. QCR10 has a role in CIII assembly and RIP1 stability. The sequence is that of Ubiquinol-cytochrome c reductase complex 6.7 kDa protein from Solanum tuberosum (Potato).